A 344-amino-acid chain; its full sequence is Probable electron transfer flavoprotein subunit alpha, mitochondrial (344 aa).

Residue L284 to D312 coordinates FAD.

Belongs to the ETF alpha-subunit/FixB family. In terms of assembly, heterodimer of an alpha and a beta subunit. FAD serves as cofactor.

Its subcellular location is the mitochondrion matrix. Its function is as follows. The electron transfer flavoprotein serves as a specific electron acceptor for several dehydrogenases, including five acyl-CoA dehydrogenases, glutaryl-CoA and sarcosine dehydrogenase. It transfers the electrons to the main mitochondrial respiratory chain via ETF-ubiquinone oxidoreductase (ETF dehydrogenase). The protein is Probable electron transfer flavoprotein subunit alpha, mitochondrial (AIM45) of Saccharomyces cerevisiae (strain ATCC 204508 / S288c) (Baker's yeast).